A 334-amino-acid polypeptide reads, in one-letter code: MIEADRLISAEPINEEEILDRAIRPKLLTEYVGQPHVREQMEIFIQAAKQRGDALDHLLIFGPPGLGKTTLANIVANEMGVNLRTTSGPVLEKAGDLAAMLTNLEPHDVLFIDEIHRLSPVVEEVLYPAMEDYQLDIMIGEGPAARSIKLDLPPFTLVGATTRAGSLTSPLRDRFGIVQRLEFYQVADLQHIVSRSANCLGLDLSEEGAHQVARRARGTPRIANRLLRRVRDFAEVRANGVINGEVAMQALDMLNVDAEGFDYMDRKLLLAIIDKFTGGPVGLDNLAAAIGEERETIEDVIEPFLIQQGFIQRTPRGRMATNHAYKHFGMVREE.

Positions Ala4–Tyr184 are large ATPase domain (RuvB-L). ATP-binding positions include Ile23, Arg24, Gly65, Lys68, Thr69, Thr70, Glu131–Tyr133, Arg174, Tyr184, and Arg221. A Mg(2+)-binding site is contributed by Thr69. Residues Gln185–Asn255 are small ATPAse domain (RuvB-S). Residues Ala258–Glu334 are head domain (RuvB-H). Arg294, Arg313, and Arg318 together coordinate DNA.

It belongs to the RuvB family. Homohexamer. Forms an RuvA(8)-RuvB(12)-Holliday junction (HJ) complex. HJ DNA is sandwiched between 2 RuvA tetramers; dsDNA enters through RuvA and exits via RuvB. An RuvB hexamer assembles on each DNA strand where it exits the tetramer. Each RuvB hexamer is contacted by two RuvA subunits (via domain III) on 2 adjacent RuvB subunits; this complex drives branch migration. In the full resolvosome a probable DNA-RuvA(4)-RuvB(12)-RuvC(2) complex forms which resolves the HJ.

Its subcellular location is the cytoplasm. The enzyme catalyses ATP + H2O = ADP + phosphate + H(+). Its function is as follows. The RuvA-RuvB-RuvC complex processes Holliday junction (HJ) DNA during genetic recombination and DNA repair, while the RuvA-RuvB complex plays an important role in the rescue of blocked DNA replication forks via replication fork reversal (RFR). RuvA specifically binds to HJ cruciform DNA, conferring on it an open structure. The RuvB hexamer acts as an ATP-dependent pump, pulling dsDNA into and through the RuvAB complex. RuvB forms 2 homohexamers on either side of HJ DNA bound by 1 or 2 RuvA tetramers; 4 subunits per hexamer contact DNA at a time. Coordinated motions by a converter formed by DNA-disengaged RuvB subunits stimulates ATP hydrolysis and nucleotide exchange. Immobilization of the converter enables RuvB to convert the ATP-contained energy into a lever motion, pulling 2 nucleotides of DNA out of the RuvA tetramer per ATP hydrolyzed, thus driving DNA branch migration. The RuvB motors rotate together with the DNA substrate, which together with the progressing nucleotide cycle form the mechanistic basis for DNA recombination by continuous HJ branch migration. Branch migration allows RuvC to scan DNA until it finds its consensus sequence, where it cleaves and resolves cruciform DNA. The protein is Holliday junction branch migration complex subunit RuvB of Serratia proteamaculans (strain 568).